Consider the following 255-residue polypeptide: uncharacterized protein (255 aa).

The signal sequence occupies residues 1–23 (MKRLNKLVLGISFLFLVISITAG). The N-palmitoyl cysteine moiety is linked to residue cysteine 24. Cysteine 24 is lipidated: S-diacylglycerol cysteine.

This sequence belongs to the staphylococcal tandem lipoprotein family.

It localises to the cell membrane. This is an uncharacterized protein from Staphylococcus aureus (strain N315).